The primary structure comprises 270 residues: Putative F-box protein At3g24700 (270 aa).

In terms of domain architecture, F-box spans 1-45 (MLTDLPLDLESEILSRVPATSLQRLKTTCKRWYALFRDPRFVKKN).

The protein is Putative F-box protein At3g24700 of Arabidopsis thaliana (Mouse-ear cress).